A 359-amino-acid chain; its full sequence is Serum paraoxonase/arylesterase 1 (359 aa).

A disulfide bridge links C42 with C353. Residue N50 is glycosylated (N-linked (GlcNAc...) asparagine). Positions 53 and 54 each coordinate Ca(2+). H115 functions as the Proton acceptor in the catalytic mechanism. Residues I117, N168, D169, and N224 each coordinate Ca(2+). N253 carries an N-linked (GlcNAc...) asparagine glycan. Residues D269 and N270 each coordinate Ca(2+). N-linked (GlcNAc...) asparagine glycosylation is found at N270 and N324.

The protein belongs to the paraoxonase family. Homodimer. Interacts with CLU. The cofactor is Ca(2+). In terms of processing, glycosylated. Post-translationally, the signal sequence is not cleaved. Plasma. Associated with HDL.

It localises to the secreted. The protein localises to the extracellular space. The enzyme catalyses a phenyl acetate + H2O = a phenol + acetate + H(+). The catalysed reaction is An aryl dialkyl phosphate + H2O = dialkyl phosphate + an aryl alcohol.. It carries out the reaction an N-acyl-L-homoserine lactone + H2O = an N-acyl-L-homoserine + H(+). Its function is as follows. Hydrolyzes the toxic metabolites of a variety of organophosphorus insecticides. Capable of hydrolyzing a broad spectrum of organophosphate substrates and lactones, and a number of aromatic carboxylic acid esters. Mediates an enzymatic protection of low density lipoproteins against oxidative modification. The chain is Serum paraoxonase/arylesterase 1 (PON1) from Oryctolagus cuniculus (Rabbit).